The following is a 311-amino-acid chain: Ribonuclease Z (311 aa).

Residues H61, H63, D65, H66, H137, D207, and H263 each contribute to the Zn(2+) site. The Proton acceptor role is filled by D65.

This sequence belongs to the RNase Z family. As to quaternary structure, homodimer. The cofactor is Zn(2+).

The catalysed reaction is Endonucleolytic cleavage of RNA, removing extra 3' nucleotides from tRNA precursor, generating 3' termini of tRNAs. A 3'-hydroxy group is left at the tRNA terminus and a 5'-phosphoryl group is left at the trailer molecule.. Zinc phosphodiesterase, which displays some tRNA 3'-processing endonuclease activity. Probably involved in tRNA maturation, by removing a 3'-trailer from precursor tRNA. The chain is Ribonuclease Z from Thermococcus onnurineus (strain NA1).